A 167-amino-acid polypeptide reads, in one-letter code: uncharacterized protein (167 aa).

It is found in the virion. This is an uncharacterized protein from Acanthamoeba polyphaga (Amoeba).